Here is a 101-residue protein sequence, read N- to C-terminus: Small ribosomal subunit protein uS14 (101 aa).

The protein belongs to the universal ribosomal protein uS14 family. As to quaternary structure, part of the 30S ribosomal subunit. Contacts proteins S3 and S10.

Functionally, binds 16S rRNA, required for the assembly of 30S particles and may also be responsible for determining the conformation of the 16S rRNA at the A site. The protein is Small ribosomal subunit protein uS14 of Aeromonas salmonicida (strain A449).